A 145-amino-acid polypeptide reads, in one-letter code: uncharacterized protein (145 aa).

Residues 37-123 are disordered; that stretch reads GKGTNTAKSS…MDREASYFAP (87 aa). Over residues 38–63 the composition is skewed to polar residues; the sequence is KGTNTAKSSGGNNGTNLNAKRSNTTQ.

This is an uncharacterized protein from Caenorhabditis elegans.